Reading from the N-terminus, the 506-residue chain is Maturase K (506 aa).

Belongs to the intron maturase 2 family. MatK subfamily.

Its subcellular location is the plastid. The protein resides in the chloroplast. Functionally, usually encoded in the trnK tRNA gene intron. Probably assists in splicing its own and other chloroplast group II introns. The polypeptide is Maturase K (Atractylodes lancea (Atractylodes japonica)).